We begin with the raw amino-acid sequence, 370 residues long: Peptide chain release factor 1 (370 aa).

An N5-methylglutamine modification is found at glutamine 239.

This sequence belongs to the prokaryotic/mitochondrial release factor family. In terms of processing, methylated by PrmC. Methylation increases the termination efficiency of RF1.

Its subcellular location is the cytoplasm. In terms of biological role, peptide chain release factor 1 directs the termination of translation in response to the peptide chain termination codons UAG and UAA. This is Peptide chain release factor 1 from Bacteroides fragilis (strain ATCC 25285 / DSM 2151 / CCUG 4856 / JCM 11019 / LMG 10263 / NCTC 9343 / Onslow / VPI 2553 / EN-2).